The following is a 95-amino-acid chain: Co-chaperonin GroES (95 aa).

It belongs to the GroES chaperonin family. Heptamer of 7 subunits arranged in a ring. Interacts with the chaperonin GroEL.

The protein resides in the cytoplasm. In terms of biological role, together with the chaperonin GroEL, plays an essential role in assisting protein folding. The GroEL-GroES system forms a nano-cage that allows encapsulation of the non-native substrate proteins and provides a physical environment optimized to promote and accelerate protein folding. GroES binds to the apical surface of the GroEL ring, thereby capping the opening of the GroEL channel. This chain is Co-chaperonin GroES, found in Chlorobaculum tepidum (strain ATCC 49652 / DSM 12025 / NBRC 103806 / TLS) (Chlorobium tepidum).